An 89-amino-acid polypeptide reads, in one-letter code: MSDNNEKQTLRTVEGRVVSNKMDKTVTVLVERQVKHPLYGKYIKRSSKLHAHDADNACNEGDVVRVTEIAPMSKTKNWRVVEIVSRAAV.

Belongs to the universal ribosomal protein uS17 family. Part of the 30S ribosomal subunit.

In terms of biological role, one of the primary rRNA binding proteins, it binds specifically to the 5'-end of 16S ribosomal RNA. The chain is Small ribosomal subunit protein uS17 from Xanthomonas campestris pv. campestris (strain B100).